The following is a 1277-amino-acid chain: NPC intracellular cholesterol transporter 1 (1277 aa).

An N-terminal signal peptide occupies residues 1 to 22; sequence MGAHHPALGLLLLLLCPAQVFS. Residues 23–269 are Lumenal-facing; sequence QSCVWYGECG…WRIWGLDAMY (247 aa). Intrachain disulfides connect cysteine 25/cysteine 74, cysteine 31/cysteine 42, cysteine 63/cysteine 109, cysteine 75/cysteine 113, cysteine 97/cysteine 238, cysteine 100/cysteine 160, cysteine 177/cysteine 184, cysteine 227/cysteine 243, and cysteine 240/cysteine 247. Asparagine 41 serves as a coordination point for cholesterol. The N-linked (GlcNAc...) asparagine glycan is linked to asparagine 70. Residue glutamine 79 coordinates cholesterol. 2 N-linked (GlcNAc...) asparagine glycosylation sites follow: asparagine 122 and asparagine 137. The segment at 175-205 is important for cholesterol binding and cholesterol transfer from NPC1 to liposomes; it reads LLCGRDARACNATNWIEYMFNKDNGQAPFTI. 3 N-linked (GlcNAc...) asparagine glycosylation sites follow: asparagine 185, asparagine 222, and asparagine 228. Residues 270–290 form a helical membrane-spanning segment; sequence VIMWVTYVAFLFVFFGALLAV. Topologically, residues 291 to 350 are cytoplasmic; the sequence is WCHRRRYFVSEYTPIDSNIAFSVNSSDKGEASCCDPLGAAFDDCLRRMFTKWGAFCVRNP. A helical membrane pass occupies residues 351-371; sequence TCIIFFSLAFITVCSSGLVFV. Topologically, residues 372–621 are lumenal; the sequence is QVTTNPVELW…ELNRESNSDV (250 aa). Residues asparagine 414, asparagine 459, asparagine 478, and asparagine 524 are each glycosylated (N-linked (GlcNAc...) asparagine). 2 cysteine pairs are disulfide-bonded: cysteine 468–cysteine 479 and cysteine 516–cysteine 533. The SSD domain occupies 620-785; it reads DVFTVIISYV…ITCFVSLLGL (166 aa). Residues 622–642 form a helical membrane-spanning segment; the sequence is FTVIISYVVMFLYISLALGHI. Residues 643–653 lie on the Cytoplasmic side of the membrane; the sequence is QSCSRLLVDSK. The chain crosses the membrane as a helical span at residues 654–674; sequence ISLGIAGILIVLSSVACSLGI. Residues 675–683 lie on the Lumenal side of the membrane; the sequence is FSYMGMPLT. The chain crosses the membrane as a helical span at residues 684–704; that stretch reads LIVIEVIPFLVLAVGVDNIFI. Residues 705 to 730 lie on the Cytoplasmic side of the membrane; it reads LVQTYQRDERLQEETLDQQLGRILGE. The chain crosses the membrane as a helical span at residues 731-751; the sequence is VAPTMFLSSFSETSAFFFGAL. Residues 752–759 lie on the Lumenal side of the membrane; it reads SSMPAVHT. Residues 760-780 traverse the membrane as a helical segment; it reads FSLFAGMAVLIDFLLQITCFV. Residues 781-832 are Cytoplasmic-facing; sequence SLLGLDIKRQEKNHLDILCCVRGADDGQGSHASESYLFRFFKNYFAPLLLKD. A helical membrane pass occupies residues 833 to 853; sequence WLRPIVVAVFVGVLSFSVAVV. Residues 854-1097 are Lumenal-facing; sequence NKVDIGLDQS…EQYLTIIDDT (244 aa). Asparagine 868 and asparagine 898 each carry an N-linked (GlcNAc...) asparagine glycan. Cysteine 909 and cysteine 914 are oxidised to a cystine. 4 N-linked (GlcNAc...) asparagine glycosylation sites follow: asparagine 916, asparagine 961, asparagine 968, and asparagine 1063. 3 disulfide bridges follow: cysteine 956/cysteine 1011, cysteine 957/cysteine 979, and cysteine 967/cysteine 976. A helical transmembrane segment spans residues 1098–1118; that stretch reads IFNLSVSLGSIFLVTLVVLGC. Residues 1119-1123 lie on the Cytoplasmic side of the membrane; the sequence is ELWSA. Residues 1124–1144 form a helical membrane-spanning segment; that stretch reads VIMCITIAMILVNMFGVMWLW. Position 1145 (glycine 1145) is a topological domain, lumenal. A helical membrane pass occupies residues 1146–1166; it reads ISLNAVSLVNLVMSCGISVEF. The Cytoplasmic portion of the chain corresponds to 1167-1194; it reads CSHITRAFTMSTKGSRVSRAEEALAHMG. A helical membrane pass occupies residues 1195–1215; sequence SSVFSGITLTKFGGIVVLAFA. Over 1216–1226 the chain is Lumenal; that stretch reads KSQIFEIFYFR. The chain crosses the membrane as a helical span at residues 1227 to 1247; sequence MYLAMVLLGATHGLIFLPVLL. Topologically, residues 1248 to 1277 are cytoplasmic; sequence SYIGPSVNKAKRHTTYERYRGTERERLLNF. The interval 1274-1277 is required for location in lysosomes; it reads LLNF. The Di-leucine motif signature appears at 1274-1277; sequence LLNF.

It belongs to the patched family. Interacts (via the second lumenal domain) with NPC2. Interacts with TMEM97; the interaction may decrease NPC1 availability to the cell. Interacts with TIM1. Interacts with SLC38A9; this interaction inhibits cholesterol-mediated mTORC1 activation via its sterol transport activity. N-glycosylated. As to expression, detected in liver (at protein level). Ubiquitous. Detected in adult heart, spleen, lung, liver, skeletal muscle, kidney, testis.

Its subcellular location is the late endosome membrane. It localises to the lysosome membrane. It carries out the reaction cholesterol(in) = cholesterol(out). Its function is as follows. Intracellular cholesterol transporter which acts in concert with NPC2 and plays an important role in the egress of cholesterol from the endosomal/lysosomal compartment. Unesterified cholesterol that has been released from LDLs in the lumen of the late endosomes/lysosomes is transferred by NPC2 to the cholesterol-binding pocket in the N-terminal domain of NPC1. Cholesterol binds to NPC1 with the hydroxyl group buried in the binding pocket. May play a role in vesicular trafficking in glia, a process that may be crucial for maintaining the structural and functional integrity of nerve terminals. Inhibits cholesterol-mediated mTORC1 activation throught its interaction with SLC38A9. The polypeptide is NPC intracellular cholesterol transporter 1 (Mus musculus (Mouse)).